The primary structure comprises 103 residues: MAKSQDGVAIRHYDVVLGPHITEKSTMVSEFNAVVFKVAADATKPAIKEAVEALFGVSVKSVNTVITKGKTKKWKGRPYRRSDVKKAIVTLAEGQSIDVTTGV.

Belongs to the universal ribosomal protein uL23 family. In terms of assembly, part of the 50S ribosomal subunit. Contacts protein L29, and trigger factor when it is bound to the ribosome.

One of the early assembly proteins it binds 23S rRNA. One of the proteins that surrounds the polypeptide exit tunnel on the outside of the ribosome. Forms the main docking site for trigger factor binding to the ribosome. This Zymomonas mobilis subsp. mobilis (strain ATCC 31821 / ZM4 / CP4) protein is Large ribosomal subunit protein uL23.